Here is a 165-residue protein sequence, read N- to C-terminus: Small ribosomal subunit protein uS5 (165 aa).

The 64-residue stretch at 10 to 73 (LVEKLVAVDR…EAARRNMITV (64 aa)) folds into the S5 DRBM domain.

Belongs to the universal ribosomal protein uS5 family. In terms of assembly, part of the 30S ribosomal subunit. Contacts proteins S4 and S8.

With S4 and S12 plays an important role in translational accuracy. In terms of biological role, located at the back of the 30S subunit body where it stabilizes the conformation of the head with respect to the body. In Acinetobacter baylyi (strain ATCC 33305 / BD413 / ADP1), this protein is Small ribosomal subunit protein uS5.